The primary structure comprises 512 residues: Oxalate--CoA ligase (512 aa).

Residue 168 to 179 (HTSGTTGRPKVV) coordinates ATP. A phosphoserine mark is found at serine 283 and serine 284. The FACS motif lies at 381–429 (DRFFRTGDEGKLDKDGYVFITGRIKELVNRGGEKISPAEIDAVLMQHPD). The Microbody targeting signal motif lies at 510–512 (AKL).

It belongs to the ATP-dependent AMP-binding enzyme family.

The protein resides in the peroxisome matrix. Its subcellular location is the peroxisome membrane. It carries out the reaction oxalate + ATP + CoA = oxalyl-CoA + AMP + diphosphate. Its function is as follows. Catalyzes the first step in a degradation pathway of oxalate to CO(2) to protect the cell against the harmful effects of oxalate derived from endogenous processes or an environmental sources. The protein is Oxalate--CoA ligase (pcs60) of Schizosaccharomyces pombe (strain 972 / ATCC 24843) (Fission yeast).